The chain runs to 275 residues: Large ribosomal subunit protein uL2c (275 aa).

The tract at residues T219–A254 is disordered.

The protein belongs to the universal ribosomal protein uL2 family. In terms of assembly, part of the 50S ribosomal subunit.

The protein localises to the plastid. The protein resides in the chloroplast. This Phaeodactylum tricornutum (strain CCAP 1055/1) protein is Large ribosomal subunit protein uL2c (rpl2).